The sequence spans 555 residues: Potassium-transporting ATPase potassium-binding subunit (555 aa).

10 helical membrane passes run 2–22 (IWVA…PTGV), 60–80 (QYAL…YFIF), 130–150 (IGIT…VMAF), 173–193 (VFLP…VPQT), 246–266 (MSNI…PFTY), 278–298 (ILFV…TTSE), 374–394 (AGFV…GLMV), 412–432 (LIAV…ALAL), 483–503 (LVMF…AASL), and 525–545 (GIFI…MLVL).

Belongs to the KdpA family. The system is composed of three essential subunits: KdpA, KdpB and KdpC.

The protein resides in the cell membrane. In terms of biological role, part of the high-affinity ATP-driven potassium transport (or Kdp) system, which catalyzes the hydrolysis of ATP coupled with the electrogenic transport of potassium into the cytoplasm. This subunit binds the extracellular potassium ions and delivers the ions to the membrane domain of KdpB through an intramembrane tunnel. The polypeptide is Potassium-transporting ATPase potassium-binding subunit (Bacillus cereus (strain B4264)).